A 105-amino-acid polypeptide reads, in one-letter code: Large ribosomal subunit protein bL21 (105 aa).

It belongs to the bacterial ribosomal protein bL21 family. In terms of assembly, part of the 50S ribosomal subunit. Contacts protein L20.

In terms of biological role, this protein binds to 23S rRNA in the presence of protein L20. This is Large ribosomal subunit protein bL21 from Dictyoglomus turgidum (strain DSM 6724 / Z-1310).